Consider the following 210-residue polypeptide: MGCASSKQFKRPPGYEEPAVLAAQTTFTVNEVEALRELYNKMSYSIIKDGLIHKEEFQLALFRNSRKANLFADRVFDLFDLKRNGVIEFGEFVRSLSVFHPKAPKSEKTAFAFKLYDLRGTGYIEKEELREMVLALLDESDLHLSECAVEAIVDNTFSQADSNGDGRIDPEEWEEFVKANPASLRNMSLPYLQDITMAFPSFVMHSEAHD.

The N-myristoyl glycine moiety is linked to residue Gly2. 4 consecutive EF-hand domains span residues 31 to 66 (EVEALRELYNKMSYSIIKDGLIHKEEFQLALFRNSR), 67 to 102 (KANLFADRVFDLFDLKRNGVIEFGEFVRSLSVFHPK), 104 to 139 (PKSEKTAFAFKLYDLRGTGYIEKEELREMVLALLDE), and 148 to 183 (AVEAIVDNTFSQADSNGDGRIDPEEWEEFVKANPAS). The Ca(2+) site is built by Asp161, Asn163, Asp165, Arg167, and Glu172.

It belongs to the calcineurin regulatory subunit family. In terms of assembly, homodimer. Interacts with CIPK24. In terms of tissue distribution, expressed in leaves.

The protein localises to the cell membrane. Its function is as follows. Acts as a calcium sensor involved in the regulatory pathway for the control of intracellular Na(+) and K(+) homeostasis and salt tolerance. Operates in synergy with CIPK24 to activate the plasma membrane Na(+)/H(+) antiporter SOS1. May function as positive regulator of salt stress responses. CBL proteins interact with CIPK serine-threonine protein kinases. Binding of a CBL protein to the regulatory NAF domain of a CIPK protein lead to the activation of the kinase in a calcium-dependent manner. The chain is Calcineurin B-like protein 4 (CBL4) from Oryza sativa subsp. japonica (Rice).